The chain runs to 181 residues: uncharacterized protein (181 aa).

Positions Met1–Thr159 constitute an N-acetyltransferase domain.

Belongs to the acetyltransferase family.

This is an uncharacterized protein from Escherichia coli (strain K12).